The primary structure comprises 161 residues: Small ribosomal subunit protein uS19 (161 aa).

The span at 1 to 19 shows a compositional bias: basic residues; the sequence is MARQKKYSGKGGARKKNKQ. A disordered region spans residues 1 to 26; that stretch reads MARQKKYSGKGGARKKNKQKQNVAPR.

The protein belongs to the universal ribosomal protein uS19 family.

Functionally, protein S19 forms a complex with S13 that binds strongly to the 16S ribosomal RNA. The protein is Small ribosomal subunit protein uS19 of Methanococcus maripaludis (strain C5 / ATCC BAA-1333).